Consider the following 96-residue polypeptide: Protein CLAVATA 3 (96 aa).

Residues 1 to 21 (MDSKSFLLLLLLFCFLFLHDA) form the signal peptide. Residues 68–96 (ELRTVPSGPDPLHHHVNPPRQPRNNFQLP) are disordered. Hydroxyproline is present on residues Pro-73 and Pro-76. A glycan (O-linked (Ara...) hydroxyproline) is linked at Pro-76.

It belongs to the CLV3/ESR signal peptide family. In terms of assembly, interacts with the extracellular leucine-rich repeat region of CLV1. Interacts with CLV2. CLV3-derived CLE peptides interacts with a tetrameric complex made of two CLV2/CRN heterodimers. Post-translationally, the MCLV3 peptide contains two hydroxyprolines, but hydroxylation had no direct effect on MCLV3 activity. The O-glycosylation (arabinosylation) of the hydroxyproline P-76 enhances binding affinity of the MCLV3 peptide for its receptor. First detected in heart stage embryos in a patch of cells between the developing cotyledons. In vegetative and inflorescence meristems, expressed in a small cone of cells at the meristem apex.

The protein resides in the secreted. It is found in the extracellular space. Extracellular signal that regulates meristem maintenance. Acts with CLV1 as a ligand-receptor pair in a signal transduction pathway coordinating growth between adjacent meristematic regions and controlling the balance between meristem cell proliferation and differentiation. Functionally, the secreted peptide MCLV3 activates a signal transduction cascade to restrict WUSCHEL (WUS) expression, inducing shoot and root meristem consumption as cells differentiated into other organs. The sequence is that of Protein CLAVATA 3 from Arabidopsis thaliana (Mouse-ear cress).